The primary structure comprises 744 residues: Endonuclease MutS2 (744 aa).

Residue 315 to 322 participates in ATP binding; it reads GPNMGGKT. Residues 668 to 743 form the Smr domain; that stretch reads VDLRGLTVAE…GHGVTVVALR (76 aa).

It belongs to the DNA mismatch repair MutS family. MutS2 subfamily. Homodimer. Interacts with MutL. Binds to stalled ribosomes, contacting rRNA.

With respect to regulation, nuclease activity is stimulated by interaction with MutL. ATPase activity is stimulated by dsDNA. Endonuclease that is involved in the suppression of homologous recombination and may thus have a key role in the control of bacterial genetic diversity. Cleaves the phosphate backbone of oligodeoxynucleotides non-sequence-specifically at the 3' side of the phosphates. Preferably incises the branched DNA structures, especially the D-loop structure over the Holliday junction. Has ATPase activity. Binds to dsDNA but not to ssDNA. Functionally, acts as a ribosome collision sensor, splitting the ribosome into its 2 subunits. Detects stalled/collided 70S ribosomes which it binds and splits by an ATP-hydrolysis driven conformational change. Acts upstream of the ribosome quality control system (RQC), a ribosome-associated complex that mediates the extraction of incompletely synthesized nascent chains from stalled ribosomes and their subsequent degradation. Probably generates substrates for RQC. The protein is Endonuclease MutS2 of Thermus thermophilus (strain ATCC 27634 / DSM 579 / HB8).